The following is a 149-amino-acid chain: Nucleoside diphosphate kinase (149 aa).

ATP contacts are provided by Lys-9, Phe-57, Arg-85, Thr-91, Arg-102, and Asn-112. His-115 serves as the catalytic Pros-phosphohistidine intermediate.

This sequence belongs to the NDK family. Homotetramer. Requires Mg(2+) as cofactor.

The protein localises to the cytoplasm. It catalyses the reaction a 2'-deoxyribonucleoside 5'-diphosphate + ATP = a 2'-deoxyribonucleoside 5'-triphosphate + ADP. It carries out the reaction a ribonucleoside 5'-diphosphate + ATP = a ribonucleoside 5'-triphosphate + ADP. Its function is as follows. Major role in the synthesis of nucleoside triphosphates other than ATP. The ATP gamma phosphate is transferred to the NDP beta phosphate via a ping-pong mechanism, using a phosphorylated active-site intermediate. This chain is Nucleoside diphosphate kinase, found in Trichodesmium erythraeum (strain IMS101).